A 263-amino-acid polypeptide reads, in one-letter code: MRILVSNDDGILAQGIRTLANTLHRAGHTVTVVCPDRERSATGHALTMHKPLRAEAVENLFEPGLAAWAINGTPSDSVKLGLDALLGERPDLVVSGINCGANLGSDVLYSGTVSAAMEGTIEGLPSIAVSLASRVRCDFQPAADFLVRFVRALEVQPLPEAFLLNVNVPALPESEILGARVCRLGMRRYRDQFVKRVDPRGVNYYWLAGEVIESEEAPDSDVVAVGEGCIAITPLKYDLTYEPGIGLLGARQWEKIFDPLAGG.

Positions 8, 9, 40, and 98 each coordinate a divalent metal cation.

The protein belongs to the SurE nucleotidase family. The cofactor is a divalent metal cation.

It is found in the cytoplasm. It catalyses the reaction a ribonucleoside 5'-phosphate + H2O = a ribonucleoside + phosphate. Functionally, nucleotidase that shows phosphatase activity on nucleoside 5'-monophosphates. This Gloeobacter violaceus (strain ATCC 29082 / PCC 7421) protein is 5'-nucleotidase SurE.